Reading from the N-terminus, the 54-residue chain is Ovomucoid (54 aa).

In terms of domain architecture, Kazal-like spans 4 to 54; sequence VDCSDYPKPSCTLEDKPLCGSDNQTYSNKCSFCNAVVDSNGTLTLSHFGKC. 3 disulfides stabilise this stretch: Cys6–Cys36, Cys14–Cys33, and Cys22–Cys54. N-linked (GlcNAc...) asparagine glycosylation is present at Asn43.

Its subcellular location is the secreted. In Megapodius freycinet (Dusky scrubfowl), this protein is Ovomucoid.